Reading from the N-terminus, the 619-residue chain is Frizzled and smoothened-like protein L (619 aa).

The N-terminal stretch at 1 to 24 (MITNKSKYYFFLILIFINFYLINC) is a signal peptide. N-linked (GlcNAc...) asparagine glycans are attached at residues Asn-4, Asn-63, Asn-112, Asn-143, Asn-159, Asn-184, and Asn-203. Residues 25-245 (QEEYPIDQTG…KQWDRLYDLS (221 aa)) are Extracellular-facing. The 139-residue stretch at 31–169 (DQTGKCEPYI…YSIYDLSLVN (139 aa)) folds into the FZ domain. 2 cysteine pairs are disulfide-bonded: Cys-36–Cys-106 and Cys-48–Cys-99. Residues 246 to 266 (NSLSVLSCVGTLFLLFTFNIL) form a helical membrane-spanning segment. The Cytoplasmic segment spans residues 267–278 (NKKINRFDRMNS). The chain crosses the membrane as a helical span at residues 279–299 (LFNGSVFMMSLSGVIILFAGG). The Extracellular portion of the chain corresponds to 300 to 321 (PRALIKDGGARISVWQDPLCSA). Residues 322–342 (TGFIFQLFSIAAILFWVVMSF) traverse the membrane as a helical segment. Topologically, residues 343–358 (ELWYKIKFMTKKLDLK) are cytoplasmic. The helical transmembrane segment at 359 to 379 (KYYIPFIIIVSLVFSIIPLAT) threads the bilayer. Residues 380 to 402 (KNYRMIRGNMHCWVHTTKLQNSL) lie on the Extracellular side of the membrane. A helical transmembrane segment spans residues 403-423 (FWIPLGIAITIGTIFIGLVMF). The Cytoplasmic segment spans residues 424–444 (EIHRIVSANSKGGVLKLEIKS). A helical membrane pass occupies residues 445–465 (ILNVALIYLTFIYLFAFNFYM). At 466–497 (NGQEGVVYGQIESFYQCTLENDASECTIQGPS) the chain is on the extracellular side. Residues 498 to 518 (IGSLGFFIFCIRIYGVYCFIL) form a helical membrane-spanning segment. Residues 519-619 (QGLNYRAYNI…TLKDIEVSKS (101 aa)) lie on the Cytoplasmic side of the membrane. The interval 581 to 605 (LNIDSAFSKNNESDDEDDYDPYKKS) is disordered.

Belongs to the G-protein coupled receptor Fz/Smo family.

Its subcellular location is the membrane. In Dictyostelium discoideum (Social amoeba), this protein is Frizzled and smoothened-like protein L (fslL).